The sequence spans 397 residues: MTTLLNPYFGEFGGMYVPQILMPALRQLEEAFVSAQKDPEFQAQFNDLLKNYAGRPTALTKCQNITAGTNTTLYLKREDLLHGGAHKTNQVLGQALLAKRMGKTEIIAETGAGQHGVASALASALLGLKCRIYMGAKDVERQSPNVFRMRLMGAEVIPVHSGSATLKDACNEALRDWSGSYETAHYMLGTAAGPHPYPTIVREFQRMIGEETKAQILEREGRLPDAVIACVGGGSNAIGMFADFINETDVGLIGVEPGGHGIETGEHGAPLKHGRVGIYFGMKAPMMQTEDGQIEESYSISAGLDFPSVGPQHAYLNSIGRADYVSITDDEALEAFKTLCLHEGIIPALESSHALAHALKMMRENPEKEQLLVVNLSGRGDKDIFTVHDILKARGEI.

The residue at position 87 (Lys-87) is an N6-(pyridoxal phosphate)lysine.

It belongs to the TrpB family. In terms of assembly, tetramer of two alpha and two beta chains. Pyridoxal 5'-phosphate serves as cofactor.

The enzyme catalyses (1S,2R)-1-C-(indol-3-yl)glycerol 3-phosphate + L-serine = D-glyceraldehyde 3-phosphate + L-tryptophan + H2O. It functions in the pathway amino-acid biosynthesis; L-tryptophan biosynthesis; L-tryptophan from chorismate: step 5/5. Functionally, the beta subunit is responsible for the synthesis of L-tryptophan from indole and L-serine. This chain is Tryptophan synthase beta chain, found in Escherichia fergusonii (strain ATCC 35469 / DSM 13698 / CCUG 18766 / IAM 14443 / JCM 21226 / LMG 7866 / NBRC 102419 / NCTC 12128 / CDC 0568-73).